The following is a 176-amino-acid chain: Nucleoside triphosphate/diphosphate phosphatase (176 aa).

The active-site Proton donor is R23. Mg(2+) contacts are provided by N87, D103, D105, D107, D120, and E123.

Belongs to the Ntdp family. Requires Mg(2+) as cofactor.

The catalysed reaction is a ribonucleoside 5'-triphosphate + H2O = a ribonucleoside 5'-diphosphate + phosphate + H(+). It carries out the reaction a ribonucleoside 5'-diphosphate + H2O = a ribonucleoside 5'-phosphate + phosphate + H(+). Has nucleoside phosphatase activity towards nucleoside triphosphates and nucleoside diphosphates. The sequence is that of Nucleoside triphosphate/diphosphate phosphatase from Bacillus cytotoxicus (strain DSM 22905 / CIP 110041 / 391-98 / NVH 391-98).